Consider the following 645-residue polypeptide: ATP-dependent zinc metalloprotease FtsH (645 aa).

At 1–8 (MDFNREHK) the chain is on the cytoplasmic side. The chain crosses the membrane as a helical span at residues 9–29 (INFLYVLAAMVGVLLIQSLVS). Residues 30–105 (QPDHIRTIPY…FSGEPEPGPW (76 aa)) lie on the Periplasmic side of the membrane. A helical transmembrane segment spans residues 106–126 (PTILGWLMPIVGFALVWMFLI). Over 127-645 (RPMSMGPGMD…ALTVEGGEAQ (519 aa)) the chain is Cytoplasmic. 199–206 (GPPGTGKT) provides a ligand contact to ATP. Zn(2+) is bound at residue histidine 423. Glutamate 424 is an active-site residue. Positions 427 and 500 each coordinate Zn(2+). The tract at residues 612–645 (SASVLRDGGDGAADAGQDRSGEHRALTVEGGEAQ) is disordered. Basic and acidic residues predominate over residues 627–637 (GQDRSGEHRAL).

In the central section; belongs to the AAA ATPase family. It in the C-terminal section; belongs to the peptidase M41 family. Homohexamer. The cofactor is Zn(2+).

Its subcellular location is the cell inner membrane. In terms of biological role, acts as a processive, ATP-dependent zinc metallopeptidase for both cytoplasmic and membrane proteins. Plays a role in the quality control of integral membrane proteins. This is ATP-dependent zinc metalloprotease FtsH from Paraburkholderia phymatum (strain DSM 17167 / CIP 108236 / LMG 21445 / STM815) (Burkholderia phymatum).